The chain runs to 565 residues: Oxygen-dependent choline dehydrogenase (565 aa).

6–35 is an FAD binding site; sequence DYIIVGAGSAGNTLATRLTEDASVSVLLLE. Residues 182–203 form a disordered region; that stretch reads QQEGFGPMDRSVTKKGRRSSTA. Residue H475 is the Proton acceptor of the active site.

Belongs to the GMC oxidoreductase family. FAD is required as a cofactor.

The enzyme catalyses choline + A = betaine aldehyde + AH2. It carries out the reaction betaine aldehyde + NAD(+) + H2O = glycine betaine + NADH + 2 H(+). It functions in the pathway amine and polyamine biosynthesis; betaine biosynthesis via choline pathway; betaine aldehyde from choline (cytochrome c reductase route): step 1/1. Its function is as follows. Involved in the biosynthesis of the osmoprotectant glycine betaine. Catalyzes the oxidation of choline to betaine aldehyde and betaine aldehyde to glycine betaine at the same rate. The chain is Oxygen-dependent choline dehydrogenase from Pseudomonas entomophila (strain L48).